We begin with the raw amino-acid sequence, 223 residues long: N-acetylmuramate alpha-1-phosphate uridylyltransferase (223 aa).

UTP-binding positions include 11-13 (GER) and Lys-23. A substrate-binding site is contributed by Asn-105. Residue Asp-107 coordinates Mg(2+). Residues Asp-140 and Asp-205 each contribute to the substrate site. A Mg(2+)-binding site is contributed by Asp-205.

Belongs to the nucleotidyltransferase MurU family. Monomer. Mg(2+) is required as a cofactor.

The catalysed reaction is N-acetyl-alpha-D-muramate 1-phosphate + UDP + H(+) = UDP-N-acetyl-alpha-D-muramate + phosphate. It participates in cell wall biogenesis; peptidoglycan recycling. Its activity is regulated as follows. Is completely inhibited by EDTA in vitro. Catalyzes the formation of UDP-N-acetylmuramate (UDP-MurNAc), a crucial precursor of the bacterial peptidoglycan cell wall, from UTP and MurNAc-alpha-1P. Is involved in peptidoglycan recycling as part of a cell wall recycling pathway that bypasses de novo biosynthesis of the peptidoglycan precursor UDP-MurNAc. Plays a role in intrinsic resistance to fosfomycin, which targets the de novo synthesis of UDP-MurNAc. Is not able to use GlcNAc-alpha-1P and GalNAc-alpha-1P as substrates. Cannot accept other nucleotide triphosphates (ATP, CTP, TTP, or GTP) than UTP. The sequence is that of N-acetylmuramate alpha-1-phosphate uridylyltransferase from Pseudomonas putida (strain ATCC 47054 / DSM 6125 / CFBP 8728 / NCIMB 11950 / KT2440).